Here is a 119-residue protein sequence, read N- to C-terminus: Large ribosomal subunit protein uL22 (119 aa).

It belongs to the universal ribosomal protein uL22 family. Part of the 50S ribosomal subunit.

In terms of biological role, this protein binds specifically to 23S rRNA; its binding is stimulated by other ribosomal proteins, e.g. L4, L17, and L20. It is important during the early stages of 50S assembly. It makes multiple contacts with different domains of the 23S rRNA in the assembled 50S subunit and ribosome. Its function is as follows. The globular domain of the protein is located near the polypeptide exit tunnel on the outside of the subunit, while an extended beta-hairpin is found that lines the wall of the exit tunnel in the center of the 70S ribosome. The protein is Large ribosomal subunit protein uL22 of Microcystis aeruginosa (strain NIES-843 / IAM M-2473).